The chain runs to 230 residues: Cytochrome c-552 (230 aa).

Positions 1–47 are cleaved as a signal peptide; it reads MTTYLSQDRLRNKENDTMTYQHSKMYQSRTFLLFSALLLVAGQASAA. Positions 63, 66, 67, 166, 169, and 170 each coordinate heme c.

Post-translationally, binds 2 heme c groups covalently per subunit.

It is found in the periplasm. In terms of biological role, diheme, high potential cytochrome c. In Acidithiobacillus ferridurans, this protein is Cytochrome c-552 (cyc1).